A 459-amino-acid chain; its full sequence is Chromosomal replication initiator protein DnaA (459 aa).

The tract at residues 1–73 is domain I, interacts with DnaA modulators; the sequence is MEIPIESLWS…AHAVQDILGH (73 aa). The interval 73 to 117 is domain II; it reads HPVGIYITVAQGDEVSHFSEREVSWESTNPSSIPESLPHHNHKTT. Residues 118 to 334 form a domain III, AAA+ region region; that stretch reads ELNSKYVFSR…GALIRAVAYI (217 aa). ATP-binding residues include glycine 162, glycine 164, lysine 165, and threonine 166. Positions 335 to 459 are domain IV, binds dsDNA; it reads SIWGLPMTVE…INMTSRSQKS (125 aa).

The protein belongs to the DnaA family. As to quaternary structure, oligomerizes as a right-handed, spiral filament on DNA at oriC.

It localises to the cytoplasm. Plays an essential role in the initiation and regulation of chromosomal replication. ATP-DnaA binds to the origin of replication (oriC) to initiate formation of the DNA replication initiation complex once per cell cycle. Binds the DnaA box (a 9 base pair repeat at the origin) and separates the double-stranded (ds)DNA. Forms a right-handed helical filament on oriC DNA; dsDNA binds to the exterior of the filament while single-stranded (ss)DNA is stabiized in the filament's interior. The ATP-DnaA-oriC complex binds and stabilizes one strand of the AT-rich DNA unwinding element (DUE), permitting loading of DNA polymerase. After initiation quickly degrades to an ADP-DnaA complex that is not apt for DNA replication. Binds acidic phospholipids. The polypeptide is Chromosomal replication initiator protein DnaA (Nostoc punctiforme (strain ATCC 29133 / PCC 73102)).